A 331-amino-acid polypeptide reads, in one-letter code: Beta-ketoacyl-[acyl-carrier-protein] synthase III (331 aa).

Catalysis depends on residues Cys-115 and His-255. Residues 256 to 260 (QANFR) form an ACP-binding region. Asn-285 is an active-site residue.

This sequence belongs to the thiolase-like superfamily. FabH family. As to quaternary structure, homodimer.

The protein resides in the cytoplasm. The catalysed reaction is malonyl-[ACP] + acetyl-CoA + H(+) = 3-oxobutanoyl-[ACP] + CO2 + CoA. The protein operates within lipid metabolism; fatty acid biosynthesis. Catalyzes the condensation reaction of fatty acid synthesis by the addition to an acyl acceptor of two carbons from malonyl-ACP. Catalyzes the first condensation reaction which initiates fatty acid synthesis and may therefore play a role in governing the total rate of fatty acid production. Possesses both acetoacetyl-ACP synthase and acetyl transacylase activities. Its substrate specificity determines the biosynthesis of branched-chain and/or straight-chain of fatty acids. The sequence is that of Beta-ketoacyl-[acyl-carrier-protein] synthase III from Helicobacter pylori (strain Shi470).